The following is a 395-amino-acid chain: ATP-dependent RNA helicase eIF4A (395 aa).

The short motif at 22–50 (TSFDDLGLKDELLRGIYGYGFENPSSIQQ) is the Q motif element. The region spanning 53 to 223 (ILPVIKGNDV…GKFMRDPVRI (171 aa)) is the Helicase ATP-binding domain. 66-73 (AQSGTGKT) lines the ATP pocket. A DEAD box motif is present at residues 171–174 (DEAD). In terms of domain architecture, Helicase C-terminal spans 234–395 (GIKQFYIDVE…EMPTNIADLI (162 aa)).

The protein belongs to the DEAD box helicase family. eIF4A subfamily. In terms of assembly, component of the eIF4F complex, which composition varies with external and internal environmental conditions. It is composed of at least eIF4A, eIF4E and eIF4G.

The protein resides in the cytoplasm. The enzyme catalyses ATP + H2O = ADP + phosphate + H(+). ATP-dependent RNA helicase which is a subunit of the eIF4F complex involved in cap recognition and is required for mRNA binding to ribosome. In the current model of translation initiation, eIF4A unwinds RNA secondary structures in the 5'-UTR of mRNAs which is necessary to allow efficient binding of the small ribosomal subunit, and subsequent scanning for the initiator codon. The sequence is that of ATP-dependent RNA helicase eIF4A (TIF1) from Yarrowia lipolytica (strain CLIB 122 / E 150) (Yeast).